The sequence spans 120 residues: UPF0344 protein lmo2265 (120 aa).

The next 4 helical transmembrane spans lie at 3–23, 33–53, 62–82, and 92–112; these read GYIH…ALLI, MLQM…IMMV, ILAI…EMLL, and GMFL…GFYL.

Belongs to the UPF0344 family.

It is found in the cell membrane. In Listeria monocytogenes serovar 1/2a (strain ATCC BAA-679 / EGD-e), this protein is UPF0344 protein lmo2265.